Consider the following 492-residue polypeptide: Spore germination protein XA (492 aa).

7 helical membrane-spanning segments follow: residues 246 to 266, 285 to 305, 325 to 345, 353 to 373, 377 to 397, 413 to 433, and 442 to 462; these read FILL…FPFF, LLSL…VALV, EGIP…FELL, PAAF…QAAI, FVSP…FTLV, FLMS…LIVI, and GLPF…PSTF.

Belongs to the GerABKA family.

It is found in the cell membrane. May allow B.anthracis to germinate within phagocytic cells and therefore involved in virulence. The protein is Spore germination protein XA (gerXA) of Bacillus anthracis.